A 144-amino-acid polypeptide reads, in one-letter code: Small ribosomal subunit protein uS12 (144 aa).

The tract at residues 1 to 55 is disordered; the sequence is MPTINQLVRKGREDKVVKSKSPALQKGYNSFKKSQTNQSSPQKRGVCTRVGTMTP. Positions 27–42 are enriched in polar residues; the sequence is GYNSFKKSQTNQSSPQ. Asp102 is subject to 3-methylthioaspartic acid. A disordered region spans residues 119–144; that stretch reads GVNNRKQGRSKYGTKRPKPGQAAAKK. The segment covering 124–144 has biased composition (basic residues); it reads KQGRSKYGTKRPKPGQAAAKK.

The protein belongs to the universal ribosomal protein uS12 family. In terms of assembly, part of the 30S ribosomal subunit. Contacts proteins S8 and S17. May interact with IF1 in the 30S initiation complex.

Functionally, with S4 and S5 plays an important role in translational accuracy. Interacts with and stabilizes bases of the 16S rRNA that are involved in tRNA selection in the A site and with the mRNA backbone. Located at the interface of the 30S and 50S subunits, it traverses the body of the 30S subunit contacting proteins on the other side and probably holding the rRNA structure together. The combined cluster of proteins S8, S12 and S17 appears to hold together the shoulder and platform of the 30S subunit. The polypeptide is Small ribosomal subunit protein uS12 (Brevibacillus brevis (strain 47 / JCM 6285 / NBRC 100599)).